We begin with the raw amino-acid sequence, 462 residues long: Fez family zinc finger protein 1 (462 aa).

The short motif at 34-49 is the Engrailed homology 1 repressor element; the sequence is PLAFSIERIMSRTPEP. 6 consecutive C2H2-type zinc fingers follow at residues 260-282, 288-310, 316-338, 344-366, 372-394, and 400-423; these read FTCEVCGKVFNAHYNLTRHMPVH, FVCKICGKGFRQASTLCRHKIIH, HKCNQCGKAFNRSSTLNTHTRIH, FVCEFCGKGFHQKGNYKNHKLTH, FKCNICNKAFHQIYNLTFHMHTH, and FTCPTCGKGFCRNFDLKKHVRKLH. A disordered region spans residues 441 to 462; that stretch reads LLLPNREPSPTIQSPQLQKSGY. Residues 448-462 show a composition bias toward polar residues; that stretch reads PSPTIQSPQLQKSGY.

It belongs to the krueppel C2H2-type zinc-finger protein family.

It is found in the nucleus. Its function is as follows. Transcription repressor. Involved in the development of the forebrain region. This chain is Fez family zinc finger protein 1 (fezf1), found in Xenopus tropicalis (Western clawed frog).